The primary structure comprises 508 residues: Photosystem II CP47 reaction center protein (508 aa).

6 helical membrane passes run A21–S36, I101–W115, G140–F156, I203–S218, V237–V252, and S457–R472.

This sequence belongs to the PsbB/PsbC family. PsbB subfamily. In terms of assembly, PSII is composed of 1 copy each of membrane proteins PsbA, PsbB, PsbC, PsbD, PsbE, PsbF, PsbH, PsbI, PsbJ, PsbK, PsbL, PsbM, PsbT, PsbX, PsbY, PsbZ, Psb30/Ycf12, at least 3 peripheral proteins of the oxygen-evolving complex and a large number of cofactors. It forms dimeric complexes. Binds multiple chlorophylls. PSII binds additional chlorophylls, carotenoids and specific lipids. serves as cofactor.

The protein localises to the plastid. The protein resides in the chloroplast thylakoid membrane. Its function is as follows. One of the components of the core complex of photosystem II (PSII). It binds chlorophyll and helps catalyze the primary light-induced photochemical processes of PSII. PSII is a light-driven water:plastoquinone oxidoreductase, using light energy to abstract electrons from H(2)O, generating O(2) and a proton gradient subsequently used for ATP formation. The sequence is that of Photosystem II CP47 reaction center protein from Ranunculus macranthus (Large buttercup).